The sequence spans 97 residues: Small ribosomal subunit protein bS6 (97 aa).

Belongs to the bacterial ribosomal protein bS6 family.

In terms of biological role, binds together with bS18 to 16S ribosomal RNA. In Listeria monocytogenes serotype 4b (strain CLIP80459), this protein is Small ribosomal subunit protein bS6.